The primary structure comprises 141 residues: Protein KRTCAP2 homolog (141 aa).

The next 4 membrane-spanning stretches (helical) occupy residues 11 to 31 (VVSS…LRFC), 42 to 62 (VLLG…CVSN), 74 to 94 (AKLL…AGLV), and 97 to 117 (VCAT…NRIS).

Belongs to the KRTCAP2 family. In terms of assembly, component of the oligosaccharyltransferase (OST) complex.

It localises to the membrane. In terms of biological role, subunit of the oligosaccharyl transferase (OST) complex that catalyzes the initial transfer of a defined glycan (Glc(3)Man(9)GlcNAc(2) in eukaryotes) from the lipid carrier dolichol-pyrophosphate to an asparagine residue within an Asn-X-Ser/Thr consensus motif in nascent polypeptide chains, the first step in protein N-glycosylation. N-glycosylation occurs cotranslationally and the complex associates with the Sec61 complex at the channel-forming translocon complex that mediates protein translocation across the endoplasmic reticulum (ER). All subunits are required for a maximal enzyme activity. The sequence is that of Protein KRTCAP2 homolog from Drosophila melanogaster (Fruit fly).